A 332-amino-acid polypeptide reads, in one-letter code: Homoserine kinase (332 aa).

It belongs to the pseudomonas-type ThrB family.

The enzyme catalyses L-homoserine + ATP = O-phospho-L-homoserine + ADP + H(+). It functions in the pathway amino-acid biosynthesis; L-threonine biosynthesis; L-threonine from L-aspartate: step 4/5. This is Homoserine kinase from Burkholderia vietnamiensis (strain G4 / LMG 22486) (Burkholderia cepacia (strain R1808)).